The chain runs to 503 residues: ATP synthase subunit alpha, chloroplastic (503 aa).

Residue 170-177 coordinates ATP; the sequence is GDRQTGKT.

Belongs to the ATPase alpha/beta chains family. F-type ATPases have 2 components, CF(1) - the catalytic core - and CF(0) - the membrane proton channel. CF(1) has five subunits: alpha(3), beta(3), gamma(1), delta(1), epsilon(1). CF(0) has four main subunits: a, b, b' and c.

The protein resides in the plastid. It is found in the chloroplast thylakoid membrane. It catalyses the reaction ATP + H2O + 4 H(+)(in) = ADP + phosphate + 5 H(+)(out). Produces ATP from ADP in the presence of a proton gradient across the membrane. The alpha chain is a regulatory subunit. This chain is ATP synthase subunit alpha, chloroplastic, found in Gracilaria tenuistipitata var. liui (Red alga).